Reading from the N-terminus, the 293-residue chain is G1/S-specific cyclin-D3 (293 aa).

A Cyclin N-terminal domain is found at 27-152; sequence VLQSLLRLEE…LVLGKLKWDL (126 aa). The tract at residues 257–293 is disordered; that stretch reads REAAQTAPSPVPKAPGGSSSQGPSQTSTPTDVTAIHL. Phosphoserine occurs at positions 265 and 280. Residues 271-286 are compositionally biased toward low complexity; sequence PGGSSSQGPSQTSTPT. Threonine 284 is modified (phosphothreonine).

This sequence belongs to the cyclin family. Cyclin D subfamily. In terms of assembly, interacts with the CDK4 and CDK6 protein kinases to form a serine/threonine kinase holoenzyme complex. The cyclin subunit imparts substrate specificity to the complex. Interacts with ATF5. Interacts with EIF3K. Component of the ternary complex cyclin D/CDK4/CDKN1B required for nuclear translocation and modulation of CDK4-mediated kinase activity. Can form similar complexes with either CDKN1A or CDKN2A. Phosphorylation at Thr-284 by MAP kinases is required for ubiquitination and degradation by the DCX(AMBRA1) complex. In terms of processing, ubiquitinated by the DCX(AMBRA1) complex during the transition from G1 to S cell phase, leading to its degradation: ubiquitination is dependent on Thr-284 phosphorylation. The DCX(AMBRA1) complex represents the major regulator of CCND3 stability during the G1/S transition. Polyubiquitinated by the SCF(FBXL2) complex, leading to proteasomal degradation.

Its subcellular location is the nucleus. The protein resides in the cytoplasm. Functionally, regulatory component of the cyclin D3-CDK4 (DC) complex that phosphorylates and inhibits members of the retinoblastoma (RB) protein family including RB1 and regulates the cell-cycle during G(1)/S transition. Phosphorylation of RB1 allows dissociation of the transcription factor E2F from the RB/E2F complex and the subsequent transcription of E2F target genes which are responsible for the progression through the G(1) phase. Hypophosphorylates RB1 in early G(1) phase. Cyclin D-CDK4 complexes are major integrators of various mitogenenic and antimitogenic signals. Component of the ternary complex, cyclin D3/CDK4/CDKN1B, required for nuclear translocation and activity of the cyclin D-CDK4 complex. Shows transcriptional coactivator activity with ATF5 independently of CDK4. In Rattus norvegicus (Rat), this protein is G1/S-specific cyclin-D3.